A 257-amino-acid polypeptide reads, in one-letter code: Phycoerythrobilin:ferredoxin oxidoreductase (257 aa).

It belongs to the HY2 family.

The catalysed reaction is (3Z)-phycoerythrobilin + oxidized 2[4Fe-4S]-[ferredoxin] = 15,16-dihydrobiliverdin + reduced 2[4Fe-4S]-[ferredoxin] + 2 H(+). In terms of biological role, catalyzes the two-electron reduction of the C2 and C3(1) diene system of 15,16-dihydrobiliverdin. This Prochlorococcus marinus (strain SARG / CCMP1375 / SS120) protein is Phycoerythrobilin:ferredoxin oxidoreductase (pebB).